The sequence spans 213 residues: CASP-like protein 2A1 (213 aa).

Residues 1–41 (MSKMAEEKAAAVGGLGGAGAADAAQQQQLAAGEAAAARVRP) lie on the Cytoplasmic side of the membrane. Residues 42-62 (VETLLRAAPLGLCVAAMTVML) traverse the membrane as a helical segment. Over 63–83 (RNQQSNEYGAVAYSDLGGFKY) the chain is Extracellular. Residues 84-104 (LVYANGLCAAYSLVSAFYTAV) form a helical membrane-spanning segment. The Cytoplasmic portion of the chain corresponds to 105 to 113 (PRPATVSRS). A helical transmembrane segment spans residues 114–134 (WLVFLLDQVFTYLILAAGAAA). Topologically, residues 135–166 (AELLYLAYNGDKEVTWSEACGVFGSFCRQART) are extracellular. Residues 167–187 (SVAITFGTVLCFILLSLISSY) traverse the membrane as a helical segment. Over 188–213 (RLFSAYEAPPSSALGSKGVEIAAYPR) the chain is Cytoplasmic.

This sequence belongs to the Casparian strip membrane proteins (CASP) family. As to quaternary structure, homodimer and heterodimers.

The protein resides in the cell membrane. The protein is CASP-like protein 2A1 of Zea mays (Maize).